The sequence spans 1114 residues: MEAAVGVPDGGDQGGAGPREDATPMDAYLRKLGLYRKLVAKDGSCLFRAVAEQVLHSQSRHVEVRMACIHYLRENREKFEAFIEGSFEEYLKRLENPQEWVGQVEISALSLMYRKDFIIYREPNVSPSQVTENNFPEKVLLCFSNGNHYDIVYPIKYKESSAMCQSLLYELLYEKVFKTDVSKIVMELDTLEVADEDNSEISDSEDDSCKSKTAAAAADVNGFKPLSGNEQLKNNGNSTSLPLSRKVLKSLNPAVYRNVEYEIWLKSKQAQQKRDYSIAAGLQYEVGDKCQVRLDHNGKFLNADVQGIHSENGPVLVEELGKKHTSKNLKAPPPESWNTVSGKKMKKPSTSGQNFHSDVDYRGPKNPSKPIKAPSALPPRLQHPSGVRQHAFSSHSSGSQSQKFSSEHKNLSRTPSQIIRKPDRERVEDFDHTSRESNYFGLSPEERREKQAIEESRLLYEIQNRDEQAFPALSSSSVNQSASQSSNPCVQRKSSHVGDRKGSRRRMDTEERKDKDSIHGHSQLDKRPEPSTLENITDDKYATVSSPSKSKKLECPSPAEQKPAEHVSLSNPAPLLVSPEVHLTPAVPSLPATVPAWPSEPTTFGPTGVPAPIPVLSVTQTLTTGPDSAVSQAHLTPSPVPVSIQAVNQPLMPLPQTLSLYQDPLYPGFPCNEKGDRAIVPPYSLCQTGEDLPKDKNILRFFFNLGVKAYSCPMWAPHSYLYPLHQAYLAACRMYPKVPVPVYPHNPWFQEAPAAQNESDCTCTDAHFPMQTEASVNGQMPQPEIGPPTFSSPLVIPPSQVSESHGQLSYQADLESETPGQLLHADYEESLSGKNMFPQPSFGPNPFLGPVPIAPPFFPHVWYGYPFQGFIENPVMRQNIVLPSDEKGELDLSLENLDLSKDCGSVSTVDEFPEARGEHVHSLPEASVSSKPDEGRTEQSSQTRKADTALASIPPVAEGKAHPPTQILNRERETVPVELEPKRTIQSLKEKTEKVKDPKTAADVVSPGANSVDSRVQRPKEESSEDENEVSNILRSGRSKQFYNQTYGSRKYKSDWGYSGRGGYQHVRSEESWKGQPSRSRDEGYQYHRNVRGRPFRGDRRRSGMGDGHRGQHT.

Position 1 is an N-acetylmethionine (methionine 1). Positions 1–22 (MEAAVGVPDGGDQGGAGPREDA) are disordered. The span at 8 to 17 (PDGGDQGGAG) shows a compositional bias: gly residues. One can recognise an OTU domain in the interval 34–155 (LYRKLVAKDG…GNHYDIVYPI (122 aa)). A cys-loop region spans residues 39 to 45 (VAKDGSC). The active site involves aspartate 42. The active-site Nucleophile is the cysteine 45. The variable-loop stretch occupies residues 94-104 (LENPQEWVGQV). Tyrosine 120 carries the phosphotyrosine modification. A phosphoserine mark is found at serine 126 and serine 128. Threonine 131 carries the post-translational modification Phosphothreonine. The his-loop stretch occupies residues 143–148 (FSNGNH). Histidine 148 is a catalytic residue. A phosphoserine mark is found at serine 166, serine 199, serine 202, serine 204, and serine 341. The interval 323-449 (KHTSKNLKAP…FGLSPEERRE (127 aa)) is disordered. Low complexity predominate over residues 392 to 404 (FSSHSSGSQSQKF). Positions 420–435 (RKPDRERVEDFDHTSR) are enriched in basic and acidic residues. A Phosphotyrosine modification is found at tyrosine 439. Serine 443 carries the post-translational modification Phosphoserine. A Phosphotyrosine modification is found at tyrosine 460. The disordered stretch occupies residues 472-567 (ALSSSSVNQS…PAEQKPAEHV (96 aa)). The segment covering 474 to 487 (SSSSVNQSASQSSN) has biased composition (low complexity). A compositionally biased stretch (basic and acidic residues) spans 496–529 (HVGDRKGSRRRMDTEERKDKDSIHGHSQLDKRPE). Residues serine 546, serine 893, and serine 900 each carry the phosphoserine modification. Residues 911–1114 (EFPEARGEHV…MGDGHRGQHT (204 aa)) form a disordered region. 2 stretches are compositionally biased toward basic and acidic residues: residues 913–922 (PEARGEHVHS) and 969–1000 (NRER…DPKT). Serine 1006, serine 1011, serine 1014, serine 1023, and serine 1024 each carry phosphoserine. Over residues 1039–1048 (SKQFYNQTYG) the composition is skewed to polar residues. The residue at position 1049 (serine 1049) is a Phosphoserine. 2 stretches are compositionally biased toward basic and acidic residues: residues 1067–1086 (VRSE…EGYQ) and 1096–1114 (FRGD…GQHT).

In terms of assembly, interacts with MYD88; the interaction is direct. Interacts with ALKBH3; the interaction is direct. Interacts with USP7; the interaction is direct. Interacts with USP9X; the interaction is direct. Phosphorylated on Ser-202 and Ser-204 likely by CSNK2A1-CSNK2A2 serine/threonine-protein kinase complex. Activates 'Lys-63'-specific deubiquitinase activity.

The protein resides in the cytoplasm. It localises to the nucleus. It catalyses the reaction Thiol-dependent hydrolysis of ester, thioester, amide, peptide and isopeptide bonds formed by the C-terminal Gly of ubiquitin (a 76-residue protein attached to proteins as an intracellular targeting signal).. With respect to regulation, phosphorylation on Ser-202 and Ser-204 induces 'Lys-63'-specific deubiquitinase activity. Functionally, deubiquitinase which hydrolyzes the isopeptide bond between the ubiquitin C-terminus and the lysine epsilon-amino group of the target protein. May negatively regulate inflammatory and pathogen recognition signaling in innate immune response. Upon phosphorylation at Ser-202 and Ser-204 residues, via IL-1 receptor and Toll-like receptor signaling pathway, specifically deubiquitinates 'Lys-63'-polyubiquitinated MYD88 adapter protein triggering down-regulation of NF-kappa-B-dependent transcription of inflammatory mediators. Independently of the catalytic activity, acts as a scaffold for alternative deubiquitinases to assemble specific deubiquitinase-substrate complexes. Associates with USP7 and USP9X deubiquitinases to stabilize alkylation repair enzyme ALKBH3, thereby promoting the repair of alkylated DNA lesions. This chain is OTU domain-containing protein 4, found in Homo sapiens (Human).